The chain runs to 686 residues: Pollen receptor-like kinase 5 (686 aa).

The signal sequence occupies residues 1–39; that stretch reads MRNWEDPFTLACNTALKKNLPSCIFIIIFISVLCPVAMS. Topologically, residues 40-283 are extracellular; the sequence is QVVVPDSDAD…GKKAGSFYTL (244 aa). Asn60 carries an N-linked (GlcNAc...) asparagine glycan. 5 LRR repeats span residues 112–135, 136–159, 161–184, 185–208, and 210–230; these read MKNL…VKRF, TSLK…AFLG, PLLK…LASL, PMLL…QQKD, and KLAS…LRNM. The chain crosses the membrane as a helical span at residues 284–304; the sequence is AIILIVIGIILVIIALVFCFV. The Cytoplasmic portion of the chain corresponds to 305-686; that stretch reads QSRRRNFLSA…DDDFGFSMNR (382 aa). The span at 328–339 shows a compositional bias: polar residues; it reads NYHQSTNKNNKP. The disordered stretch occupies residues 328-355; the sequence is NYHQSTNKNNKPAESVNHTRRGSMPDPG. The region spanning 375–648 is the Protein kinase domain; it reads RASAEVLGSG…REVVEMVEML (274 aa). Position 377 is a phosphoserine (Ser377). ATP contacts are provided by residues 381–389 and Lys403; that span reads LGSGTFGAS. Residues Ser455 and Ser458 each carry the phosphoserine modification. Thr472 is subject to Phosphothreonine. At Tyr542 the chain carries Phosphotyrosine. Ser545 bears the Phosphoserine mark.

This sequence belongs to the protein kinase superfamily. Ser/Thr protein kinase family. As to quaternary structure, interacts with the GRI peptide. Expressed in pollen and/or in flowers. Detected at low levels in leaves.

It localises to the cell membrane. It carries out the reaction L-seryl-[protein] + ATP = O-phospho-L-seryl-[protein] + ADP + H(+). The enzyme catalyses L-threonyl-[protein] + ATP = O-phospho-L-threonyl-[protein] + ADP + H(+). In terms of biological role, receptor-like kinase involved in the control of pollen germination and pollen tube polar growth. The extracellular domain serves as a sensor for peptides derived from GRI. May act as a downstream element for ROS-dependent cell death induced by GRI. This chain is Pollen receptor-like kinase 5, found in Arabidopsis thaliana (Mouse-ear cress).